The primary structure comprises 619 residues: Very-long-chain aldehyde decarbonylase GL1-1 (619 aa).

Transmembrane regions (helical) follow at residues 44–64 (LLLL…WSSF), 93–113 (DNFL…FPSL), 123–143 (GLAV…YAAH), 190–210 (AAAC…VLGF), and 322–342 (PFLL…WAWS). The Fatty acid hydroxylase domain occupies 129–269 (LLHVAATEPL…MPLFDLIGGT (141 aa)).

This sequence belongs to the sterol desaturase family. Homodimer.

It localises to the endoplasmic reticulum membrane. The enzyme catalyses a long-chain fatty aldehyde + 2 NADPH + O2 + H(+) = a long-chain alkane + formate + 2 NADP(+) + H2O. Its function is as follows. Aldehyde decarbonylase involved in the conversion of aldehydes to alkanes. Core component of a very-long-chain alkane synthesis complex. The polypeptide is Very-long-chain aldehyde decarbonylase GL1-1 (Oryza sativa subsp. indica (Rice)).